Consider the following 133-residue polypeptide: MDFVMKQALGGATKDMGKMLGGDEEKDPDAEKKEEERLEALRQAEEERAGKYAKMEAEREVMRQGIRDKYGIKKKEEKEAEAMAAMEAQAEGSLTRPKKAIPAGCGDEDEEEESILDTVLKYLPGPLQDMFKK.

2 disordered regions span residues 1-40 (MDFVMKQALGGATKDMGKMLGGDEEKDPDAEKKEEERLEA) and 85-112 (AMEAQAEGSLTRPKKAIPAGCGDEDEEE). Residues 15–40 (DMGKMLGGDEEKDPDAEKKEEERLEA) are compositionally biased toward basic and acidic residues. Positions 28 to 60 (PDAEKKEEERLEALRQAEEERAGKYAKMEAERE) form a coiled coil.

It belongs to the complexin/synaphin family. Binds to the SNARE core complex containing SNAP25, VAMP2 and syntaxin-1. Nervous system. Present in electric organ (at protein level).

Its subcellular location is the cytoplasm. The protein localises to the cytosol. In terms of biological role, positively regulates a late step in synaptic vesicle exocytosis. The chain is Complexin-1 from Narke japonica (Japanese sleeper ray).